A 99-amino-acid polypeptide reads, in one-letter code: Protein Tat (99 aa).

Residues 1–24 (MEVVDPKIDPWNHPGSQPETPCNN) are interaction with human CREBBP. Residues 1 to 48 (MEVVDPKIDPWNHPGSQPETPCNNCYCKKCCFHCPLCFMKKGLGISYG) are transactivation. Residues Cys-22, Cys-25, and Cys-27 each coordinate Zn(2+). The tract at residues 22–37 (CNNCYCKKCCFHCPLC) is cysteine-rich. Lys-28 is subject to N6-acetyllysine; by host PCAF. Residues Cys-30, His-33, Cys-34, and Cys-37 each coordinate Zn(2+). Residues 38-48 (FMKKGLGISYG) are core. A disordered region spans residues 47–99 (YGRKKRRQRRRTPQGSKIHQDPVPKQPLSQTRGDPTGPEESKKKVESQTETDP). Residues 48–58 (GRKKRRQRRRT) show a composition bias toward basic residues. The Nuclear localization signal, RNA-binding (TAR), and protein transduction signature appears at 49 to 57 (RKKRRQRRR). Residues 49 to 86 (RKKRRQRRRTPQGSKIHQDPVPKQPLSQTRGDPTGPEE) form an interaction with the host capping enzyme RNGTT region. Lys-50 and Lys-51 each carry N6-acetyllysine; by host EP300 and GCN5L2. Asymmetric dimethylarginine; by host PRMT6 is present on residues Arg-52 and Arg-53. A Glycyl lysine isopeptide (Lys-Gly) (interchain with G-Cter in ubiquitin) cross-link involves residue Lys-71. Residues 78 to 80 (RGD) carry the Cell attachment site motif.

The protein belongs to the lentiviruses Tat family. In terms of assembly, interacts with host CCNT1. Associates with the P-TEFb complex composed at least of Tat, P-TEFb (CDK9 and CCNT1), TAR RNA, RNA Pol II. Recruits the HATs CREBBP, TAF1/TFIID, EP300, PCAF and GCN5L2. Interacts with host KAT5/Tip60; this interaction targets the latter to degradation. Interacts with the host deacetylase SIRT1. Interacts with host capping enzyme RNGTT; this interaction stimulates RNGTT. Binds to host KDR, and to the host integrins ITGAV/ITGB3 and ITGA5/ITGB1. Interacts with host KPNB1/importin beta-1 without previous binding to KPNA1/importin alpha-1. Interacts with EIF2AK2. Interacts with host nucleosome assembly protein NAP1L1; this interaction may be required for the transport of Tat within the nucleus, since the two proteins interact at the nuclear rim. Interacts with host C1QBP/SF2P32; this interaction involves lysine-acetylated Tat. Interacts with the host chemokine receptors CCR2, CCR3 and CXCR4. Interacts with host DPP4/CD26; this interaction may trigger an anti-proliferative effect. Interacts with host LDLR. Interacts with the host extracellular matrix metalloproteinase MMP1. Interacts with host PRMT6; this interaction mediates Tat's methylation. Interacts with, and is ubiquitinated by MDM2/Hdm2. Interacts with host PSMC3 and HTATIP2. Interacts with STAB1; this interaction may overcome SATB1-mediated repression of IL2 and IL2RA (interleukin) in T cells by binding to the same domain than HDAC1. Interacts (when acetylated) with human CDK13, thereby increasing HIV-1 mRNA splicing and promoting the production of the doubly spliced HIV-1 protein Nef. Interacts with host TBP; this interaction modulates the activity of transcriptional pre-initiation complex. Interacts with host RELA. Interacts with host PLSCR1; this interaction negatively regulates Tat transactivation activity by altering its subcellular distribution. In terms of processing, asymmetrical arginine methylation by host PRMT6 seems to diminish the transactivation capacity of Tat and affects the interaction with host CCNT1. Acetylation by EP300, CREBBP, GCN5L2/GCN5 and PCAF regulates the transactivation activity of Tat. EP300-mediated acetylation of Lys-50 promotes dissociation of Tat from the TAR RNA through the competitive binding to PCAF's bromodomain. In addition, the non-acetylated Tat's N-terminus can also interact with PCAF. PCAF-mediated acetylation of Lys-28 enhances Tat's binding to CCNT1. Lys-50 is deacetylated by SIRT1. Post-translationally, polyubiquitination by host MDM2 does not target Tat to degradation, but activates its transactivation function and fosters interaction with CCNT1 and TAR RNA. In terms of processing, phosphorylated by EIF2AK2 on serine and threonine residues adjacent to the basic region important for TAR RNA binding and function. Phosphorylation of Tat by EIF2AK2 is dependent on the prior activation of EIF2AK2 by dsRNA.

The protein resides in the host nucleus. Its subcellular location is the host nucleolus. It is found in the host cytoplasm. It localises to the secreted. Transcriptional activator that increases RNA Pol II processivity, thereby increasing the level of full-length viral transcripts. Recognizes a hairpin structure at the 5'-LTR of the nascent viral mRNAs referred to as the transactivation responsive RNA element (TAR) and recruits the cyclin T1-CDK9 complex (P-TEFb complex) that will in turn hyperphosphorylate the RNA polymerase II to allow efficient elongation. The CDK9 component of P-TEFb and other Tat-activated kinases hyperphosphorylate the C-terminus of RNA Pol II that becomes stabilized and much more processive. Other factors such as HTATSF1/Tat-SF1, SUPT5H/SPT5, and HTATIP2 are also important for Tat's function. Besides its effect on RNA Pol II processivity, Tat induces chromatin remodeling of proviral genes by recruiting the histone acetyltransferases (HATs) CREBBP, EP300 and PCAF to the chromatin. This also contributes to the increase in proviral transcription rate, especially when the provirus integrates in transcriptionally silent region of the host genome. To ensure maximal activation of the LTR, Tat mediates nuclear translocation of NF-kappa-B by interacting with host RELA. Through its interaction with host TBP, Tat may also modulate transcription initiation. Tat can reactivate a latently infected cell by penetrating in it and transactivating its LTR promoter. In the cytoplasm, Tat is thought to act as a translational activator of HIV-1 mRNAs. Functionally, extracellular circulating Tat can be endocytosed by surrounding uninfected cells via the binding to several surface receptors such as CD26, CXCR4, heparan sulfate proteoglycans (HSPG) or LDLR. Neurons are rarely infected, but they internalize Tat via their LDLR. Through its interaction with nuclear HATs, Tat is potentially able to control the acetylation-dependent cellular gene expression. Modulates the expression of many cellular genes involved in cell survival, proliferation or in coding for cytokines or cytokine receptors. Tat plays a role in T-cell and neurons apoptosis. Tat induced neurotoxicity and apoptosis probably contribute to neuroAIDS. Circulating Tat also acts as a chemokine-like and/or growth factor-like molecule that binds to specific receptors on the surface of the cells, affecting many cellular pathways. In the vascular system, Tat binds to ITGAV/ITGB3 and ITGA5/ITGB1 integrins dimers at the surface of endothelial cells and competes with bFGF for heparin-binding sites, leading to an excess of soluble bFGF. The polypeptide is Protein Tat (Homo sapiens (Human)).